Here is a 327-residue protein sequence, read N- to C-terminus: Clavesin-2 (327 aa).

Residues 96-257 form the CRAL-TRIO domain; the sequence is IKQALKDGFP…EFGGMLPPYD (162 aa). The segment at 287–327 is disordered; sequence EVEKELSPKSMKRSQSVVDPTVLKRMDKNEEENMQPLLSLD. Phosphoserine is present on S325.

In terms of assembly, forms a complex with clathrin heavy chain and gamma-adaptin.

It localises to the golgi apparatus. Its subcellular location is the trans-Golgi network membrane. The protein localises to the cytoplasmic vesicle. The protein resides in the clathrin-coated vesicle. It is found in the early endosome membrane. Its function is as follows. Required for normal morphology of late endosomes and/or lysosomes in neurons. Binds phosphatidylinositol 3,5-bisphosphate (PtdIns(3,5)P2). The sequence is that of Clavesin-2 (CLVS2) from Homo sapiens (Human).